The sequence spans 81 residues: Cortexin-3 (81 aa).

Residues 29–49 traverse the membrane as a helical segment; it reads MTFVFVILLFIFLGILIVRCF.

The protein belongs to the cortexin family.

Its subcellular location is the membrane. This chain is Cortexin-3 (CTXN3), found in Homo sapiens (Human).